A 506-amino-acid polypeptide reads, in one-letter code: Tyrosine-protein kinase FRK (506 aa).

The SH3 domain occupies 43–111 (SQGQYFVALF…PSNYVAEDRS (69 aa)). The SH2 domain maps to 117 to 209 (WFFGAIKRAD…GLCVKLEKPC (93 aa)). A Phosphothreonine modification is found at Thr179. The 258-residue stretch at 235–492 (IQLLKRLGSG…TLHWKLEDYF (258 aa)) folds into the Protein kinase domain. Residues 241–249 (LGSGQFGEV) and Lys263 contribute to the ATP site. The Proton acceptor role is filled by Asp355. The residue at position 388 (Tyr388) is a Phosphotyrosine; by autocatalysis.

Belongs to the protein kinase superfamily. Tyr protein kinase family. SRC subfamily. Interacts (via the SH3-domain) with PTEN. Interacts with RB1. Highly expressed in stomach, small intestine and colon. Concentrated in the brush border membranes of epithelial cells, throughout the maturation axis of the adult small intestine.

It is found in the cytoplasm. The protein resides in the nucleus. It catalyses the reaction L-tyrosyl-[protein] + ATP = O-phospho-L-tyrosyl-[protein] + ADP + H(+). Its function is as follows. Non-receptor tyrosine-protein kinase that negatively regulates cell proliferation. Positively regulates PTEN protein stability through phosphorylation of PTEN on 'Tyr-336', which in turn prevents its ubiquitination and degradation, possibly by reducing its binding to NEDD4. May function as a tumor suppressor. The polypeptide is Tyrosine-protein kinase FRK (Frk) (Rattus norvegicus (Rat)).